The primary structure comprises 362 residues: 3-dehydroquinate synthase (362 aa).

NAD(+) contacts are provided by residues 71–76 (DGEQYK), 105–109 (GVIGD), 129–130 (TT), Lys142, Lys151, and 169–172 (CLKT). 3 residues coordinate Zn(2+): Glu184, His247, and His264.

Belongs to the sugar phosphate cyclases superfamily. Dehydroquinate synthase family. Co(2+) serves as cofactor. Requires Zn(2+) as cofactor. The cofactor is NAD(+).

The protein localises to the cytoplasm. The catalysed reaction is 7-phospho-2-dehydro-3-deoxy-D-arabino-heptonate = 3-dehydroquinate + phosphate. The protein operates within metabolic intermediate biosynthesis; chorismate biosynthesis; chorismate from D-erythrose 4-phosphate and phosphoenolpyruvate: step 2/7. Functionally, catalyzes the conversion of 3-deoxy-D-arabino-heptulosonate 7-phosphate (DAHP) to dehydroquinate (DHQ). This chain is 3-dehydroquinate synthase, found in Salmonella schwarzengrund (strain CVM19633).